A 143-amino-acid chain; its full sequence is CRISPR-associated endoribonuclease Cas2 (143 aa).

Position 14 (aspartate 14) interacts with Mg(2+).

Belongs to the CRISPR-associated endoribonuclease Cas2 protein family. Homodimer, forms a heterotetramer with a Cas1 homodimer. It depends on Mg(2+) as a cofactor.

In terms of biological role, CRISPR (clustered regularly interspaced short palindromic repeat), is an adaptive immune system that provides protection against mobile genetic elements (viruses, transposable elements and conjugative plasmids). CRISPR clusters contain sequences complementary to antecedent mobile elements and target invading nucleic acids. CRISPR clusters are transcribed and processed into CRISPR RNA (crRNA). Functions as a ssRNA-specific endoribonuclease. Involved in the integration of spacer DNA into the CRISPR cassette. The chain is CRISPR-associated endoribonuclease Cas2 from Campylobacter jejuni subsp. jejuni serotype O:2 (strain ATCC 700819 / NCTC 11168).